We begin with the raw amino-acid sequence, 194 residues long: Imidazoleglycerol-phosphate dehydratase (194 aa).

It belongs to the imidazoleglycerol-phosphate dehydratase family.

Its subcellular location is the cytoplasm. It carries out the reaction D-erythro-1-(imidazol-4-yl)glycerol 3-phosphate = 3-(imidazol-4-yl)-2-oxopropyl phosphate + H2O. The protein operates within amino-acid biosynthesis; L-histidine biosynthesis; L-histidine from 5-phospho-alpha-D-ribose 1-diphosphate: step 6/9. The protein is Imidazoleglycerol-phosphate dehydratase of Streptococcus thermophilus (strain ATCC BAA-491 / LMD-9).